Consider the following 445-residue polypeptide: 23S rRNA (uracil(1939)-C(5))-methyltransferase RlmD (445 aa).

A TRAM domain is found at 6-64; sequence RRLPREPFEIAITGLSHEGRGIAHHDERTLFVHGALPGERVRAVYTKRRRSVAEARVVE. 4 residues coordinate [4Fe-4S] cluster: Cys-77, Cys-83, Cys-86, and Cys-165. S-adenosyl-L-methionine contacts are provided by Gln-274, Phe-303, Asn-308, Glu-324, Asp-351, and Asp-372. The active-site Nucleophile is Cys-398.

Belongs to the class I-like SAM-binding methyltransferase superfamily. RNA M5U methyltransferase family. RlmD subfamily.

The catalysed reaction is uridine(1939) in 23S rRNA + S-adenosyl-L-methionine = 5-methyluridine(1939) in 23S rRNA + S-adenosyl-L-homocysteine + H(+). Functionally, catalyzes the formation of 5-methyl-uridine at position 1939 (m5U1939) in 23S rRNA. In Alkalilimnicola ehrlichii (strain ATCC BAA-1101 / DSM 17681 / MLHE-1), this protein is 23S rRNA (uracil(1939)-C(5))-methyltransferase RlmD.